The sequence spans 401 residues: NADH-quinone oxidoreductase subunit D (401 aa).

The protein belongs to the complex I 49 kDa subunit family. NDH-1 is composed of 15 different subunits. Subunits NuoB, C, D, E, F, and G constitute the peripheral sector of the complex.

It is found in the cell membrane. The enzyme catalyses a quinone + NADH + 5 H(+)(in) = a quinol + NAD(+) + 4 H(+)(out). NDH-1 shuttles electrons from NADH, via FMN and iron-sulfur (Fe-S) centers, to quinones in the respiratory chain. The immediate electron acceptor for the enzyme in this species is believed to be a menaquinone. Couples the redox reaction to proton translocation (for every two electrons transferred, four hydrogen ions are translocated across the cytoplasmic membrane), and thus conserves the redox energy in a proton gradient. In Deinococcus radiodurans (strain ATCC 13939 / DSM 20539 / JCM 16871 / CCUG 27074 / LMG 4051 / NBRC 15346 / NCIMB 9279 / VKM B-1422 / R1), this protein is NADH-quinone oxidoreductase subunit D.